A 426-amino-acid chain; its full sequence is uncharacterized protein (426 aa).

This sequence belongs to the serpin family.

This is an uncharacterized protein from Methanosarcina mazei (strain ATCC BAA-159 / DSM 3647 / Goe1 / Go1 / JCM 11833 / OCM 88) (Methanosarcina frisia).